Here is a 429-residue protein sequence, read N- to C-terminus: Adenylosuccinate synthetase (429 aa).

GTP contacts are provided by residues 12 to 18 and 40 to 42; these read GDEGKGK and GHT. D13 serves as the catalytic Proton acceptor. Residues D13 and G40 each coordinate Mg(2+). IMP is bound by residues 13–16, 38–41, T128, R142, Q223, T238, and R302; these read DEGK and NAGH. Residue H41 is the Proton donor of the active site. Residue 298-304 coordinates substrate; sequence VNTGRPR. GTP contacts are provided by residues R304, 330–332, and 412–414; these read KLD and GVG.

Belongs to the adenylosuccinate synthetase family. Homodimer. It depends on Mg(2+) as a cofactor.

The protein resides in the cytoplasm. It catalyses the reaction IMP + L-aspartate + GTP = N(6)-(1,2-dicarboxyethyl)-AMP + GDP + phosphate + 2 H(+). It functions in the pathway purine metabolism; AMP biosynthesis via de novo pathway; AMP from IMP: step 1/2. Plays an important role in the de novo pathway of purine nucleotide biosynthesis. Catalyzes the first committed step in the biosynthesis of AMP from IMP. This is Adenylosuccinate synthetase from Pseudarthrobacter chlorophenolicus (strain ATCC 700700 / DSM 12829 / CIP 107037 / JCM 12360 / KCTC 9906 / NCIMB 13794 / A6) (Arthrobacter chlorophenolicus).